Consider the following 289-residue polypeptide: MFSIFNIWGTFNKVLFFLSLTVSLAGLVGNALLLWHLGLHIKKGPFNTYLLHLAAADFLFLSCQVGFSIATIVSGHEDTLYFPVTFLWFAVGLWLLAAFSVDCCLAYMFPSFCSPNRRPRFTSVVLCLVIWALTMPAVLLPANACGLLKNGMSLLVCLKYHWTSVTWLAVLSGMACGASKFLLIFGNCCSSQPPPKFCKLAQCSGILLFFCRLPLVVYWCLRPVLKFLLPFFFPLATLLACIDSSAKPLLYYMKGRQLRKDPLQVALNRALGEESQSGLGGLSLPMHQV.

Over 1–13 (MFSIFNIWGTFNK) the chain is Extracellular. The chain crosses the membrane as a helical span at residues 14 to 34 (VLFFLSLTVSLAGLVGNALLL). Over 35-52 (WHLGLHIKKGPFNTYLLH) the chain is Cytoplasmic. A helical transmembrane segment spans residues 53–73 (LAAADFLFLSCQVGFSIATIV). Residues 74–78 (SGHED) lie on the Extracellular side of the membrane. Residues 79 to 99 (TLYFPVTFLWFAVGLWLLAAF) traverse the membrane as a helical segment. Topologically, residues 100–120 (SVDCCLAYMFPSFCSPNRRPR) are cytoplasmic. A helical membrane pass occupies residues 121–141 (FTSVVLCLVIWALTMPAVLLP). The Extracellular portion of the chain corresponds to 142–164 (ANACGLLKNGMSLLVCLKYHWTS). The chain crosses the membrane as a helical span at residues 165–185 (VTWLAVLSGMACGASKFLLIF). The Cytoplasmic portion of the chain corresponds to 186-199 (GNCCSSQPPPKFCK). A helical membrane pass occupies residues 200-220 (LAQCSGILLFFCRLPLVVYWC). At 221–222 (LR) the chain is on the extracellular side. Residues 223–243 (PVLKFLLPFFFPLATLLACID) traverse the membrane as a helical segment. The Cytoplasmic portion of the chain corresponds to 244–289 (SSAKPLLYYMKGRQLRKDPLQVALNRALGEESQSGLGGLSLPMHQV).

It belongs to the G-protein coupled receptor 1 family. Mas subfamily.

Its subcellular location is the cell membrane. Its function is as follows. Orphan receptor. May regulate nociceptor function and/or development, including the sensation or modulation of pain. The polypeptide is Mas-related G-protein coupled receptor member G (Mrgprg) (Mus musculus (Mouse)).